The sequence spans 218 residues: GTP cyclohydrolase 1 (218 aa).

C109, H112, and C180 together coordinate Zn(2+).

This sequence belongs to the GTP cyclohydrolase I family. As to quaternary structure, toroid-shaped homodecamer, composed of two pentamers of five dimers.

The enzyme catalyses GTP + H2O = 7,8-dihydroneopterin 3'-triphosphate + formate + H(+). Its pathway is cofactor biosynthesis; 7,8-dihydroneopterin triphosphate biosynthesis; 7,8-dihydroneopterin triphosphate from GTP: step 1/1. This Haemophilus influenzae (strain 86-028NP) protein is GTP cyclohydrolase 1.